A 332-amino-acid chain; its full sequence is RNA polymerase principal sigma factor HrdD (332 aa).

Positions 1–25 are disordered; the sequence is MATRAVARRQSATGETADSASSVRA. Polar residues predominate over residues 10–22; that stretch reads QSATGETADSASS. A Polymerase core binding motif is present at residues 124 to 137; that stretch reads DLIQEGNAGLVRAV. Positions 294–313 form a DNA-binding region, H-T-H motif; that stretch reads LTEVGKEHGLTRERIRQIEK.

The protein belongs to the sigma-70 factor family.

In terms of biological role, sigma factors are initiation factors that promote the attachment of RNA polymerase to specific initiation sites and are then released. The sequence is that of RNA polymerase principal sigma factor HrdD (hrdD) from Streptomyces viridifaciens.